The following is a 341-amino-acid chain: Glyceraldehyde-3-phosphate dehydrogenase 1 (341 aa).

Residues 13–14 (RI), Asp-35, and Lys-85 contribute to the NAD(+) site. D-glyceraldehyde 3-phosphate-binding positions include 157–159 (SCT), Thr-188, 217–218 (TG), and Arg-240. The active-site Nucleophile is the Cys-158. An NAD(+)-binding site is contributed by Asn-322.

The protein belongs to the glyceraldehyde-3-phosphate dehydrogenase family. In terms of assembly, homotetramer.

It localises to the cytoplasm. It catalyses the reaction D-glyceraldehyde 3-phosphate + phosphate + NAD(+) = (2R)-3-phospho-glyceroyl phosphate + NADH + H(+). It participates in carbohydrate degradation; glycolysis; pyruvate from D-glyceraldehyde 3-phosphate: step 1/5. The polypeptide is Glyceraldehyde-3-phosphate dehydrogenase 1 (gpd-1) (Caenorhabditis elegans).